Consider the following 152-residue polypeptide: uncharacterized protein (152 aa).

Residues 7-27 form a helical membrane-spanning segment; sequence TLSVIVFLISLIIIFGIYFSS.

Its subcellular location is the membrane. This is an uncharacterized protein from Methanocaldococcus jannaschii (strain ATCC 43067 / DSM 2661 / JAL-1 / JCM 10045 / NBRC 100440) (Methanococcus jannaschii).